Reading from the N-terminus, the 404-residue chain is Subtilisin-like proteinase Mp1 (404 aa).

The signal sequence occupies residues 1 to 19 (MVGFKTLALHLAAVLPALA). A propeptide spanning residues 20-112 (APVDKQATQV…VEPDQVWDLY (93 aa)) is cleaved from the precursor. Residues 33–111 (SYIITLKQGA…FVEPDQVWDL (79 aa)) enclose the Inhibitor I9 domain. The Peptidase S8 domain maps to 121 to 404 (PWGLGSISHR…NLIAFNGVTA (284 aa)). A glycan (N-linked (GlcNAc...) asparagine) is linked at N133. Active-site charge relay system residues include D154, H186, and S347.

It belongs to the peptidase S8 family.

The protein localises to the secreted. The protein is Subtilisin-like proteinase Mp1 of Magnaporthiopsis poae (Kentucky bluegrass fungus).